We begin with the raw amino-acid sequence, 272 residues long: Dermonecrotic toxin LvSicTox-alphaIC1bi (272 aa).

The active site involves histidine 5. Mg(2+)-binding residues include glutamate 25 and aspartate 27. The active-site Nucleophile is histidine 41. 2 cysteine pairs are disulfide-bonded: cysteine 45/cysteine 51 and cysteine 47/cysteine 189. Residue aspartate 84 coordinates Mg(2+).

The protein belongs to the arthropod phospholipase D family. Class II subfamily. The cofactor is Mg(2+). Expressed by the venom gland.

It is found in the secreted. It carries out the reaction an N-(acyl)-sphingosylphosphocholine = an N-(acyl)-sphingosyl-1,3-cyclic phosphate + choline. The catalysed reaction is an N-(acyl)-sphingosylphosphoethanolamine = an N-(acyl)-sphingosyl-1,3-cyclic phosphate + ethanolamine. The enzyme catalyses a 1-acyl-sn-glycero-3-phosphocholine = a 1-acyl-sn-glycero-2,3-cyclic phosphate + choline. It catalyses the reaction a 1-acyl-sn-glycero-3-phosphoethanolamine = a 1-acyl-sn-glycero-2,3-cyclic phosphate + ethanolamine. Dermonecrotic toxins cleave the phosphodiester linkage between the phosphate and headgroup of certain phospholipids (sphingolipid and lysolipid substrates), forming an alcohol (often choline) and a cyclic phosphate. This toxin acts on sphingomyelin (SM). It may also act on ceramide phosphoethanolamine (CPE), lysophosphatidylcholine (LPC) and lysophosphatidylethanolamine (LPE), but not on lysophosphatidylserine (LPS), and lysophosphatidylglycerol (LPG). It acts by transphosphatidylation, releasing exclusively cyclic phosphate products as second products. Induces dermonecrosis, hemolysis, increased vascular permeability, edema, inflammatory response, and platelet aggregation. The chain is Dermonecrotic toxin LvSicTox-alphaIC1bi from Loxosceles variegata (Recluse spider).